The following is a 318-amino-acid chain: Ribosomal RNA small subunit methyltransferase H (318 aa).

Residues 38–40 (AGH), D57, L91, D105, and Q112 each bind S-adenosyl-L-methionine.

This sequence belongs to the methyltransferase superfamily. RsmH family.

It localises to the cytoplasm. The catalysed reaction is cytidine(1402) in 16S rRNA + S-adenosyl-L-methionine = N(4)-methylcytidine(1402) in 16S rRNA + S-adenosyl-L-homocysteine + H(+). Functionally, specifically methylates the N4 position of cytidine in position 1402 (C1402) of 16S rRNA. The protein is Ribosomal RNA small subunit methyltransferase H of Clavibacter michiganensis subsp. michiganensis (strain NCPPB 382).